The chain runs to 452 residues: Lamina-associated polypeptide 2, isoforms beta/delta/epsilon/gamma (452 aa).

Positions Met1–Ser409 are nucleoplasmic. The LEM-like domain occupies Leu5 to Arg48. Disordered stretches follow at residues Arg48–Val111 and Arg149–Thr263. Residues Asn49 to Asp108 form a linker region. Phosphoserine occurs at positions 59, 66, and 67. Thr74 bears the Phosphothreonine mark. Residues Ser79 and Ser82 each carry the phosphoserine modification. Residues Arg85 and Arg87 each carry the omega-N-methylarginine modification. A compositionally biased stretch (basic and acidic residues) spans Lys96–Asp105. Residues Leu109 to Thr153 enclose the LEM domain. An NAKAP95-binding N region spans residues Thr137–Leu242. At Thr153 the chain carries Phosphothreonine. A compositionally biased stretch (polar residues) spans Glu154–Asn177. Ser155 and Ser158 each carry phosphoserine. A phosphothreonine mark is found at Thr159 and Thr163. Ser165, Ser167, and Ser176 each carry phosphoserine. A compositionally biased stretch (basic and acidic residues) spans Asp178 to Lys202. Ser179 carries the post-translational modification Phosphoserine; by PKC. A phosphoserine mark is found at Ser183 and Ser189. The residue at position 206 (Lys206) is an N6-acetyllysine. Thr210 carries the post-translational modification Phosphothreonine. Ser221 and Ser223 each carry phosphoserine. Residues Gly226–Gly240 are compositionally biased toward low complexity. Ser249, Ser253, Ser264, Ser291, Ser305, and Ser306 each carry phosphoserine. Residues Thr298 to Ala370 form a binds lamins B region. The interval Gly299–Pro373 is NAKAP95-binding C. Thr311 is modified (phosphothreonine). The residue at position 314 (Ser314) is a Phosphoserine. A Citrulline modification is found at Arg319. 3 positions are modified to phosphoserine: Ser361, Ser377, and Ser384. Lys388 is modified (N6-acetyllysine). Residue Lys400 forms a Glycyl lysine isopeptide (Lys-Gly) (interchain with G-Cter in SUMO2) linkage. Position 401 is a phosphoserine (Ser401). Residues Val410–Tyr430 traverse the membrane as a helical; Signal-anchor for type II membrane protein segment. The Lumenal segment spans residues Gln431–Asn452.

It belongs to the LEM family. As to quaternary structure, interacts with LMNB1, LMNB2, BANF1, AKAP8L, GMCL and chromosomes. Mitosis-specific phosphorylation specifically abolishes its binding to lamin B and chromosomes. Post-translationally, citrullinated by PADI4.

Its subcellular location is the nucleus inner membrane. It is found in the chromosome. Functionally, may help direct the assembly of the nuclear lamina and thereby help maintain the structural organization of the nuclear envelope. Possible receptor for attachment of lamin filaments to the inner nuclear membrane. May be involved in the control of initiation of DNA replication through its interaction with NAKAP95. This Mus musculus (Mouse) protein is Lamina-associated polypeptide 2, isoforms beta/delta/epsilon/gamma (Tmpo).